Consider the following 164-residue polypeptide: Phosphopantetheine adenylyltransferase (164 aa).

Ser9 serves as a coordination point for substrate. Residues Ser9–Phe10 and His17 each bind ATP. The substrate site is built by Lys41, Val78, and Arg92. ATP-binding positions include Gly93 to Arg95, Glu103, and Ser128 to Thr134.

The protein belongs to the bacterial CoaD family. In terms of assembly, homohexamer. It depends on Mg(2+) as a cofactor.

Its subcellular location is the cytoplasm. The catalysed reaction is (R)-4'-phosphopantetheine + ATP + H(+) = 3'-dephospho-CoA + diphosphate. It participates in cofactor biosynthesis; coenzyme A biosynthesis; CoA from (R)-pantothenate: step 4/5. Reversibly transfers an adenylyl group from ATP to 4'-phosphopantetheine, yielding dephospho-CoA (dPCoA) and pyrophosphate. This chain is Phosphopantetheine adenylyltransferase, found in Agrobacterium fabrum (strain C58 / ATCC 33970) (Agrobacterium tumefaciens (strain C58)).